A 303-amino-acid polypeptide reads, in one-letter code: uncharacterized protein (303 aa).

This is an uncharacterized protein from Leptospira interrogans.